The chain runs to 528 residues: Probable rhamnogalacturonate lyase A (528 aa).

A signal peptide spans 1–20; it reads MLSKATLLLFLPSWARVTYA. The N-linked (GlcNAc...) asparagine glycan is linked to asparagine 46. Cysteine 50 and cysteine 93 are disulfide-bonded. Residue asparagine 148 is glycosylated (N-linked (GlcNAc...) asparagine). A disulfide bridge connects residues cysteine 184 and cysteine 193. N-linked (GlcNAc...) asparagine glycosylation is present at asparagine 351.

Belongs to the polysaccharide lyase 4 family.

The protein localises to the secreted. It carries out the reaction Endotype eliminative cleavage of L-alpha-rhamnopyranosyl-(1-&gt;4)-alpha-D-galactopyranosyluronic acid bonds of rhamnogalacturonan I domains in ramified hairy regions of pectin leaving L-rhamnopyranose at the reducing end and 4-deoxy-4,5-unsaturated D-galactopyranosyluronic acid at the non-reducing end.. Its function is as follows. Pectinolytic enzymes consist of four classes of enzymes: pectin lyase, polygalacturonase, pectin methylesterase and rhamnogalacturonase. Degrades the rhamnogalacturonan I (RG-I) backbone of pectin. The polypeptide is Probable rhamnogalacturonate lyase A (rglA) (Aspergillus fumigatus (strain CBS 144.89 / FGSC A1163 / CEA10) (Neosartorya fumigata)).